Consider the following 234-residue polypeptide: MLSVCYSDPCLSDFCQGKRPLRIASRNSNLAKAQVHECISLLRSWYPKLWFQLSTTETTGDREKKIPLHLVENSYFFTDGVDALVHKGVCDLAIHSAKDLPETPSLPVVAITRCLHPADLLVYADHYVHEPLPLSPRLGSSSLRRSAVLKQLFPQGQILDIRGTIEERLDQLHRGHYDAIVLAKAASLRLHLHHAYSIELPPPYHALQGSLAITAKDHAGKWKQLFTPIHCHSS.

This sequence belongs to the HMBS family.

It carries out the reaction 4 porphobilinogen + H2O = hydroxymethylbilane + 4 NH4(+). Its pathway is porphyrin-containing compound metabolism; protoporphyrin-IX biosynthesis; coproporphyrinogen-III from 5-aminolevulinate: step 2/4. Its function is as follows. Tetrapolymerization of the monopyrrole PBG into the hydroxymethylbilane pre-uroporphyrinogen in several discrete steps. This is Probable porphobilinogen deaminase (hemC) from Chlamydia pneumoniae (Chlamydophila pneumoniae).